The sequence spans 336 residues: Ornithine carbamoyltransferase (336 aa).

Carbamoyl phosphate contacts are provided by residues 56–59 (STRT), Q83, R107, and 134–137 (HPTQ). Residues N168, D232, and 236-237 (SM) contribute to the L-ornithine site. Carbamoyl phosphate contacts are provided by residues 274 to 275 (CL) and R320.

It belongs to the aspartate/ornithine carbamoyltransferase superfamily. OTCase family.

The protein resides in the cytoplasm. The catalysed reaction is carbamoyl phosphate + L-ornithine = L-citrulline + phosphate + H(+). It functions in the pathway amino-acid biosynthesis; L-arginine biosynthesis; L-arginine from L-ornithine and carbamoyl phosphate: step 1/3. Reversibly catalyzes the transfer of the carbamoyl group from carbamoyl phosphate (CP) to the N(epsilon) atom of ornithine (ORN) to produce L-citrulline. The protein is Ornithine carbamoyltransferase of Erwinia tasmaniensis (strain DSM 17950 / CFBP 7177 / CIP 109463 / NCPPB 4357 / Et1/99).